The following is a 292-amino-acid chain: MQKYEKLEKIGEGTYGTVFKAKNRETHEIVALKRVRLDDDDEGVPSSALREICLLKELKHKNIVRLHDVLHSDKKLTLVFEFCDQDLKKYFDSCNGDLDPEIVKSFLFQLLKGLGFCHSRNVLHRDLKPQNLLINRNGELKLADFGLARAFGIPVRCYSAEVVTLWYRPPDVLFGAKLYSTSIDMWSAGCIFAELANAGRPLFPGNDVDDQLKRIFRLLGTPTEEQWPSMTKLPDYKPYPMYPATTSLVNVVPKLNATGRDLLQNLLKCNPVQRISAEEALQHPYFSDFCPP.

The region spanning 4–286 is the Protein kinase domain; it reads YEKLEKIGEG…AEEALQHPYF (283 aa). ATP-binding positions include 10 to 18 and K33; that span reads IGEGTYGTV. A Phosphotyrosine; by ABL1, EPHA4 and FYN modification is found at Y15. Residue T17 is modified to Phosphothreonine. Residue K56 is modified to N6-acetyllysine. Phosphoserine is present on S72. D126 (proton acceptor) is an active-site residue. A Phosphoserine modification is found at S159.

The protein belongs to the protein kinase superfamily. CMGC Ser/Thr protein kinase family. CDC2/CDKX subfamily. As to quaternary structure, heterodimer composed of a catalytic subunit CDK5 and a regulatory subunit CDK5R1 (p25) and macromolecular complex composed of at least CDK5, CDK5R1 (p35) and CDK5RAP1 or CDK5RAP2 or CDK5RAP3. Only the heterodimer shows kinase activity. Under neurotoxic stress and neuronal injury conditions, p35 is cleaved by calpain to generate p25 that hyperactivates CDK5, that becomes functionally disabled and often toxic. Found in a trimolecular complex with CABLES1 and ABL1. Interacts with CABLES1 and CABLES2. Interacts with AATK and GSTP1. Binds to HDAC1 when in complex with p25. Interaction with myristoylation p35 promotes CDK5 association with membranes. Both isoforms 1 and 2 interacts with beta-catenin/CTNNB1. Interacts with delta-catenin/CTNND2 and APEX1. Interacts with P53/TP53 in neurons. Interacts with EPHA4; may mediate the activation of NGEF by EPHA4. Interacts with PTK2/FAK1. The complex p35/CDK5 interacts with CLOCK. Interacts with HTR6. In terms of processing, phosphorylation on Tyr-15 by ABL1 and FYN, and on Ser-159 by casein kinase 1 promotes kinase activity. By contrast, phosphorylation at Thr-14 inhibits activity. Post-translationally, phosphorylation at Ser-159 is essential for maximal catalytic activity. Ubiquitously expressed. Accumulates in cortical neurons (at protein level). In terms of tissue distribution, expressed in the testis, skeletal muscle, colon, bone marrow and ovary.

It is found in the cytoplasm. Its subcellular location is the nucleus. It localises to the cell membrane. The protein localises to the perikaryon. The protein resides in the cell projection. It is found in the lamellipodium. Its subcellular location is the growth cone. It localises to the postsynaptic density. The protein localises to the synapse. The enzyme catalyses L-seryl-[protein] + ATP = O-phospho-L-seryl-[protein] + ADP + H(+). It carries out the reaction L-threonyl-[protein] + ATP = O-phospho-L-threonyl-[protein] + ADP + H(+). Inhibited by 2-(1-ethyl-2-hydroxyethylamino)-6-benzylamino-9-isopropylpurine (roscovitine), 1-isopropyl-4-aminobenzyl-6-ether-linked benzimidazoles, resveratrol, AT-7519 and olomoucine. Activated by CDK5R1 (p35) and CDK5R2 (p39) during the development of the nervous system; degradation of CDK5R1 (p35) and CDK5R2 (p39) by proteasome result in down regulation of kinase activity, during this process, CDK5 phosphorylates p35 and induces its ubiquitination and subsequent degradation. Kinase activity is mainly determined by the amount of p35 available and subcellular location; reversible association to plasma membrane inhibits activity. Long-term inactivation as well as CDK5R1 (p25)-mediated hyperactivation of CDK5 triggers cell death. The pro-death activity of hyperactivated CDK5 is suppressed by membrane association of CDK5, via myristoylation of p35. Brain-derived neurotrophic factor, glial-derived neurotrophic factor, nerve growth factor (NGF), retinoic acid, laminin and neuregulin promote activity. Neurotoxicity enhances nuclear activity, thus leading to MEF2 phosphorylation and inhibition prior to apoptosis of cortical neurons. Repression by GSTP1 via p25/p35 translocation prevents neurodegeneration. Proline-directed serine/threonine-protein kinase essential for neuronal cell cycle arrest and differentiation and may be involved in apoptotic cell death in neuronal diseases by triggering abortive cell cycle re-entry. Interacts with D1 and D3-type G1 cyclins. Phosphorylates SRC, NOS3, VIM/vimentin, p35/CDK5R1, MEF2A, SIPA1L1, SH3GLB1, PXN, PAK1, MCAM/MUC18, SEPT5, SYN1, DNM1, AMPH, SYNJ1, CDK16, RAC1, RHOA, CDC42, TONEBP/NFAT5, MAPT/TAU, MAP1B, histone H1, p53/TP53, HDAC1, APEX1, PTK2/FAK1, huntingtin/HTT, ATM, MAP2, NEFH and NEFM. Regulates several neuronal development and physiological processes including neuronal survival, migration and differentiation, axonal and neurite growth, synaptogenesis, oligodendrocyte differentiation, synaptic plasticity and neurotransmission, by phosphorylating key proteins. Negatively regulates the CACNA1B/CAV2.2 -mediated Ca(2+) release probability at hippocampal neuronal soma and synaptic terminals. Activated by interaction with CDK5R1 (p35) and CDK5R2 (p39), especially in postmitotic neurons, and promotes CDK5R1 (p35) expression in an autostimulation loop. Phosphorylates many downstream substrates such as Rho and Ras family small GTPases (e.g. PAK1, RAC1, RHOA, CDC42) or microtubule-binding proteins (e.g. MAPT/TAU, MAP2, MAP1B), and modulates actin dynamics to regulate neurite growth and/or spine morphogenesis. Also phosphorylates exocytosis associated proteins such as MCAM/MUC18, SEPT5, SYN1, and CDK16/PCTAIRE1 as well as endocytosis associated proteins such as DNM1, AMPH and SYNJ1 at synaptic terminals. In the mature central nervous system (CNS), regulates neurotransmitter movements by phosphorylating substrates associated with neurotransmitter release and synapse plasticity; synaptic vesicle exocytosis, vesicles fusion with the presynaptic membrane, and endocytosis. Promotes cell survival by activating anti-apoptotic proteins BCL2 and STAT3, and negatively regulating of JNK3/MAPK10 activity. Phosphorylation of p53/TP53 in response to genotoxic and oxidative stresses enhances its stabilization by preventing ubiquitin ligase-mediated proteasomal degradation, and induces transactivation of p53/TP53 target genes, thus regulating apoptosis. Phosphorylation of p35/CDK5R1 enhances its stabilization by preventing calpain-mediated proteolysis producing p25/CDK5R1 and avoiding ubiquitin ligase-mediated proteasomal degradation. During aberrant cell-cycle activity and DNA damage, p25/CDK5 activity elicits cell-cycle activity and double-strand DNA breaks that precedes neuronal death by deregulating HDAC1. DNA damage triggered phosphorylation of huntingtin/HTT in nuclei of neurons protects neurons against polyglutamine expansion as well as DNA damage mediated toxicity. Phosphorylation of PXN reduces its interaction with PTK2/FAK1 in matrix-cell focal adhesions (MCFA) during oligodendrocytes (OLs) differentiation. Negative regulator of Wnt/beta-catenin signaling pathway. Activator of the GAIT (IFN-gamma-activated inhibitor of translation) pathway, which suppresses expression of a post-transcriptional regulon of proinflammatory genes in myeloid cells; phosphorylates the linker domain of glutamyl-prolyl tRNA synthetase (EPRS) in a IFN-gamma-dependent manner, the initial event in assembly of the GAIT complex. Phosphorylation of SH3GLB1 is required for autophagy induction in starved neurons. Phosphorylation of TONEBP/NFAT5 in response to osmotic stress mediates its rapid nuclear localization. MEF2 is inactivated by phosphorylation in nucleus in response to neurotoxin, thus leading to neuronal apoptosis. APEX1 AP-endodeoxyribonuclease is repressed by phosphorylation, resulting in accumulation of DNA damage and contributing to neuronal death. NOS3 phosphorylation down regulates NOS3-derived nitrite (NO) levels. SRC phosphorylation mediates its ubiquitin-dependent degradation and thus leads to cytoskeletal reorganization. May regulate endothelial cell migration and angiogenesis via the modulation of lamellipodia formation. Involved in dendritic spine morphogenesis by mediating the EFNA1-EPHA4 signaling. The complex p35/CDK5 participates in the regulation of the circadian clock by modulating the function of CLOCK protein: phosphorylates CLOCK at 'Thr-451' and 'Thr-461' and regulates the transcriptional activity of the CLOCK-BMAL1 heterodimer in association with altered stability and subcellular distribution. This is Cyclin-dependent kinase 5 from Homo sapiens (Human).